Reading from the N-terminus, the 187-residue chain is Protein GrpE (187 aa).

Belongs to the GrpE family. In terms of assembly, homodimer.

It is found in the cytoplasm. In terms of biological role, participates actively in the response to hyperosmotic and heat shock by preventing the aggregation of stress-denatured proteins, in association with DnaK and GrpE. It is the nucleotide exchange factor for DnaK and may function as a thermosensor. Unfolded proteins bind initially to DnaJ; upon interaction with the DnaJ-bound protein, DnaK hydrolyzes its bound ATP, resulting in the formation of a stable complex. GrpE releases ADP from DnaK; ATP binding to DnaK triggers the release of the substrate protein, thus completing the reaction cycle. Several rounds of ATP-dependent interactions between DnaJ, DnaK and GrpE are required for fully efficient folding. In Albidiferax ferrireducens (strain ATCC BAA-621 / DSM 15236 / T118) (Rhodoferax ferrireducens), this protein is Protein GrpE.